The chain runs to 145 residues: D-aminoacyl-tRNA deacylase (145 aa).

The Gly-cisPro motif, important for rejection of L-amino acids motif lies at 137–138 (GP).

The protein belongs to the DTD family. As to quaternary structure, homodimer.

It is found in the cytoplasm. The catalysed reaction is glycyl-tRNA(Ala) + H2O = tRNA(Ala) + glycine + H(+). It carries out the reaction a D-aminoacyl-tRNA + H2O = a tRNA + a D-alpha-amino acid + H(+). Functionally, an aminoacyl-tRNA editing enzyme that deacylates mischarged D-aminoacyl-tRNAs. Also deacylates mischarged glycyl-tRNA(Ala), protecting cells against glycine mischarging by AlaRS. Acts via tRNA-based rather than protein-based catalysis; rejects L-amino acids rather than detecting D-amino acids in the active site. By recycling D-aminoacyl-tRNA to D-amino acids and free tRNA molecules, this enzyme counteracts the toxicity associated with the formation of D-aminoacyl-tRNA entities in vivo and helps enforce protein L-homochirality. The chain is D-aminoacyl-tRNA deacylase from Psychromonas ingrahamii (strain DSM 17664 / CCUG 51855 / 37).